A 653-amino-acid polypeptide reads, in one-letter code: MIHQNLAIMIIILPLVSSVINGLFLNRIDKKLAKIIAISFLLLSALFSLIIFCDATLVGKIIHIKLLPWIEFRNFKVNWSIYIDQLTSIMFIVVTFVSSVVHIYSLGYMANDKGIIRFLSFLSLFTFFMLMLVSADNFLQLFCGWEGVGVCSYLLIGFWYSKESANKAAMKAFITNRVSDFAFILGIITIIIYNGSANYKDVFLSAKLLSNTKILVHFSILDIICLLLSIGCIGKSAQIGLHVWLPDAMEGPTPVSALIHAATMVTAGIFLVARCSYLFEYSPIVLQFITIIGGITCLFAASIAIMQSDIKKIIAYSTCSQLGYMFMACGVSSYNSAIFHLVTHAFFKALLFLSAGSVIHSVNEHNIFKMGNLINKMPITYGNFLIGSLALIGIYPLSGFYSKDLILEAAYSSGSFMFIFGITAAMLTAIYSMKIIILVFHGKTKLEKDVFEHAHEPTKTMNNPLILLVAGSFFSGMLGYYLLSMNKPNGYFHESLFNLHIYKLLINHTPLYIKLLPMAVGIVGIVIGICLYKDSLPYHDALTNKSNKSKKDWIPQSNYKMILFIPNILRNKYYFDEIYNYLIIKPIHCLAYLFYLGDQKIIDRFGPNGFARVINYFCALTCKIQTGYIFNYALYIVSFIVITISYFVWKSIY.

Transmembrane regions (helical) follow at residues 8–28 (IMII…LNRI), 35–55 (IIAI…FCDA), 89–109 (IMFI…LGYM), 115–135 (IIRF…LVSA), 138–158 (FLQL…LIGF), 178–198 (VSDF…GSAN), 214–234 (ILVH…GCIG), 253–273 (TPVS…FLVA), 285–305 (VLQF…SIAI), 313–333 (IIAY…GVSS), 336–356 (SAIF…LSAG), 377–397 (MPIT…IYPL), 418–438 (FIFG…IIIL), 465–485 (LILL…LLSM), 511–531 (LYIK…GICL), 577–597 (EIYN…FYLG), and 629–649 (IFNY…YFVW).

The protein belongs to the complex I subunit 5 family.

It is found in the cell membrane. The catalysed reaction is a quinone + NADH + 5 H(+)(in) = a quinol + NAD(+) + 4 H(+)(out). In terms of biological role, NDH-1 shuttles electrons from NADH, via FMN and iron-sulfur (Fe-S) centers, to quinones in the respiratory chain. Couples the redox reaction to proton translocation (for every two electrons transferred, four hydrogen ions are translocated across the cytoplasmic membrane), and thus conserves the redox energy in a proton gradient. In Rickettsia typhi (strain ATCC VR-144 / Wilmington), this protein is NADH-quinone oxidoreductase subunit L (nuoL).